Reading from the N-terminus, the 138-residue chain is Small ribosomal subunit protein uS11B (138 aa).

Residues 118–138 are disordered; sequence DVTPVPSDSTRKKGGRRGRRL. The span at 129–138 shows a compositional bias: basic residues; that stretch reads KKGGRRGRRL.

The protein belongs to the universal ribosomal protein uS11 family. In terms of assembly, component of the small ribosomal subunit (SSU). Mature yeast ribosomes consist of a small (40S) and a large (60S) subunit. The 40S small subunit contains 1 molecule of ribosomal RNA (18S rRNA) and 33 different proteins (encoded by 57 genes). The large 60S subunit contains 3 rRNA molecules (25S, 5.8S and 5S rRNA) and 46 different proteins (encoded by 81 genes). uS11 interacts with eS1 forming part of the mRNA exit tunnel. uS11 interacts with snoRNA U3. uS11 interacts with MPP10. Component of the ribosomal small subunit (SSU) processome composed of at least 40 protein subunits and snoRNA U3.

Its subcellular location is the cytoplasm. It is found in the nucleus. It localises to the nucleolus. In terms of biological role, component of the ribosome, a large ribonucleoprotein complex responsible for the synthesis of proteins in the cell. The small ribosomal subunit (SSU) binds messenger RNAs (mRNAs) and translates the encoded message by selecting cognate aminoacyl-transfer RNA (tRNA) molecules. The large subunit (LSU) contains the ribosomal catalytic site termed the peptidyl transferase center (PTC), which catalyzes the formation of peptide bonds, thereby polymerizing the amino acids delivered by tRNAs into a polypeptide chain. The nascent polypeptides leave the ribosome through a tunnel in the LSU and interact with protein factors that function in enzymatic processing, targeting, and the membrane insertion of nascent chains at the exit of the ribosomal tunnel. uS11 is involved in nucleolar processing of pre-18S ribosomal RNA and ribosome assembly. This is Small ribosomal subunit protein uS11B from Saccharomyces cerevisiae (strain ATCC 204508 / S288c) (Baker's yeast).